We begin with the raw amino-acid sequence, 566 residues long: Nitrate/nitrite sensor protein NarQ (566 aa).

Residues 1-13 (MIVKRPVSASLAR) lie on the Cytoplasmic side of the membrane. A helical transmembrane segment spans residues 14 to 34 (AFFYIVLLSILSTGIALLTLA). The Periplasmic segment spans residues 35 to 146 (SSLRDAEAIN…LALQHYAERK (112 aa)). Residues 147 to 167 (MLLVVAISLAGGIGIFTLVFF) traverse the membrane as a helical segment. Topologically, residues 168–566 (TLRRIRHQVV…SAEGEESQLM (399 aa)) are cytoplasmic. Residues 174-227 (HQVVAPLNQLVTASQRIEHGQFDSPPLDTNLPNELGLLAKTFNQMSSELHKLYR) enclose the HAMP domain. Residues 364 to 559 (TIARELHDSL…LVSISFRSAE (196 aa)) enclose the Histidine kinase domain. The residue at position 370 (histidine 370) is a Phosphohistidine; by autocatalysis.

It localises to the cell inner membrane. The enzyme catalyses ATP + protein L-histidine = ADP + protein N-phospho-L-histidine.. Functionally, acts as a sensor for nitrate/nitrite and transduces signal of nitrate/nitrite availability to the NarL/NarP proteins. NarQ probably activates NarL and NarP by phosphorylation. NarQ probably negatively regulates the NarL protein by dephosphorylation. This Escherichia coli (strain K12) protein is Nitrate/nitrite sensor protein NarQ (narQ).